The chain runs to 330 residues: Malate dehydrogenase (330 aa).

13–19 (GAAGQIG) provides a ligand contact to NAD(+). Substrate is bound by residues R94 and R100. NAD(+) contacts are provided by residues N107, Q114, and 131 to 133 (VGN). Substrate is bound by residues N133 and R164. H189 acts as the Proton acceptor in catalysis.

This sequence belongs to the LDH/MDH superfamily. MDH type 2 family.

It carries out the reaction (S)-malate + NAD(+) = oxaloacetate + NADH + H(+). In terms of biological role, catalyzes the reversible oxidation of malate to oxaloacetate. The polypeptide is Malate dehydrogenase (Deinococcus deserti (strain DSM 17065 / CIP 109153 / LMG 22923 / VCD115)).